We begin with the raw amino-acid sequence, 353 residues long: uncharacterized protein (353 aa).

An N-terminal signal peptide occupies residues 1–30; the sequence is MHLRHLFSPRLRGSLLLGSLLVASSFSTLA.

This is an uncharacterized protein from Salmonella typhimurium (strain LT2 / SGSC1412 / ATCC 700720).